A 791-amino-acid polypeptide reads, in one-letter code: DUF1769 family protein duc1 (791 aa).

Positions alanine 158 to proline 189 are disordered. Low complexity predominate over residues serine 174–serine 184. The short motif at arginine 373–glutamate 379 is the FFAT element. Residue tyrosine 374 is modified to Phosphotyrosine. A Phosphothreonine modification is found at threonine 376. Disordered stretches follow at residues glutamine 381–arginine 505, asparagine 542–lysine 606, and proline 630–proline 658. Over residues leucine 415–serine 426 the composition is skewed to basic residues. The segment covering serine 444–alanine 453 has biased composition (low complexity). Residues lysine 455–isoleucine 473 show a composition bias toward basic and acidic residues. Serine 477 and serine 493 each carry phosphoserine. A compositionally biased stretch (basic residues) spans serine 477–lysine 487. Residues glutamate 555–proline 564 are compositionally biased toward polar residues. Serine 574 bears the Phosphoserine mark. Positions serine 574 to aspartate 586 are enriched in basic and acidic residues. Positions glutamate 587 to glutamine 601 are enriched in polar residues.

It belongs to the UPF0590 family. As to quaternary structure, interacts (via FFAT-motif) with scs2 (via MSP domain); the interaction is direct and serves to restrict the localization of duc1 to areas of cell membrane-endoplasmic reticulum contact sites, and away from the cell division site.

The protein localises to the cell membrane. In terms of biological role, promotes the proper distribution of phosphatidylinositol 4,5-bisphosphate (PtdIns(4,5)P2/PIP2) synthesis at the cell membrane. May bind phosphatidylinositol 4,5-bisphosphate (PtdIns(4,5)P2/PIP2) and is required for robust anchoring of the contractile ring to the cell membrane. The chain is DUF1769 family protein duc1 from Schizosaccharomyces pombe (strain 972 / ATCC 24843) (Fission yeast).